The primary structure comprises 493 residues: Aspartate-semialdehyde dehydrogenase (Non-phosphorylating) (493 aa).

Residues 160–161 (WN), 184–187 (KPAH), and 237–238 (GS) contribute to the NADP(+) site. Glu259 functions as the Proton acceptor in the catalytic mechanism. Leu260 contributes to the NADP(+) binding site. The Nucleophile role is filled by Cys293. Glu390 contacts NADP(+).

This sequence belongs to the aldehyde dehydrogenase family.

Its subcellular location is the cytoplasm. It carries out the reaction L-aspartate 4-semialdehyde + NAD(+) + H2O = L-aspartate + NADH + 2 H(+). In terms of biological role, involved in the degradation of ectoine, which allows H.elongata to utilize ectoine as both a carbon and a nitrogen source for growth. Probably catalyzes the NAD(+)-dependent oxidation of L-aspartate-semialdehyde to L-aspartate. The sequence is that of Aspartate-semialdehyde dehydrogenase (Non-phosphorylating) from Halomonas elongata (strain ATCC 33173 / DSM 2581 / NBRC 15536 / NCIMB 2198 / 1H9).